We begin with the raw amino-acid sequence, 81 residues long: Putative chemokine-related protein B42 (81 aa).

3 disulfide bridges follow: Cys-7-Cys-73, Cys-8-Cys-29, and Cys-11-Cys-45.

In terms of tissue distribution, expressed in placenta, heart, lung, liver, pancreas, skeletal muscle and brain.

It localises to the cytoplasm. This is Putative chemokine-related protein B42 from Homo sapiens (Human).